The primary structure comprises 390 residues: Succinyl-diaminopimelate desuccinylase (390 aa).

His-74 is a binding site for Zn(2+). Asp-76 is an active-site residue. Asp-107 contributes to the Zn(2+) binding site. Glu-140 (proton acceptor) is an active-site residue. Zn(2+) is bound by residues Glu-141, Glu-169, and His-363.

The protein belongs to the peptidase M20A family. DapE subfamily. Homodimer. Requires Zn(2+) as cofactor. Co(2+) serves as cofactor.

The enzyme catalyses N-succinyl-(2S,6S)-2,6-diaminopimelate + H2O = (2S,6S)-2,6-diaminopimelate + succinate. It participates in amino-acid biosynthesis; L-lysine biosynthesis via DAP pathway; LL-2,6-diaminopimelate from (S)-tetrahydrodipicolinate (succinylase route): step 3/3. Functionally, catalyzes the hydrolysis of N-succinyl-L,L-diaminopimelic acid (SDAP), forming succinate and LL-2,6-diaminopimelate (DAP), an intermediate involved in the bacterial biosynthesis of lysine and meso-diaminopimelic acid, an essential component of bacterial cell walls. The polypeptide is Succinyl-diaminopimelate desuccinylase (Bartonella quintana (strain Toulouse) (Rochalimaea quintana)).